The following is a 242-amino-acid chain: NAD-dependent protein deacetylase (242 aa).

The 242-residue stretch at 1–242 (MQQFEEVHSI…EFVEGLSSRK (242 aa)) folds into the Deacetylase sirtuin-type domain. 8 residues coordinate NAD(+): A23, T27, F34, R35, Q102, I104, D105, and H120. F34 is a binding site for nicotinamide. Residues I104 and D105 each coordinate nicotinamide. H120 (proton acceptor) is an active-site residue. Residues C128, C131, C148, and C151 each contribute to the Zn(2+) site. T187, S188, N213, and I231 together coordinate NAD(+).

Belongs to the sirtuin family. Class U subfamily. Zn(2+) is required as a cofactor.

Its subcellular location is the cytoplasm. It carries out the reaction N(6)-acetyl-L-lysyl-[protein] + NAD(+) + H2O = 2''-O-acetyl-ADP-D-ribose + nicotinamide + L-lysyl-[protein]. Its function is as follows. NAD-dependent protein deacetylase which modulates the activities of several enzymes which are inactive in their acetylated form. This Bacillus cereus (strain ATCC 10987 / NRS 248) protein is NAD-dependent protein deacetylase.